A 116-amino-acid chain; its full sequence is Large ribosomal subunit protein bL17 (116 aa).

Belongs to the bacterial ribosomal protein bL17 family. Part of the 50S ribosomal subunit. Contacts protein L32.

The protein is Large ribosomal subunit protein bL17 of Aliarcobacter butzleri (strain RM4018) (Arcobacter butzleri).